Reading from the N-terminus, the 232-residue chain is NKG2-D type II integral membrane protein (232 aa).

At 1 to 66 (MALIRDRKSH…IEKLKISPMF (66 aa)) the chain is on the cytoplasmic side. The helical; Signal-anchor for type II membrane protein transmembrane segment at 67-89 (VVRVLAIALAIRFTLNTLMWLAI) threads the bilayer. Over 90 to 232 (FKETFQPVLC…NTYICMKRAV (143 aa)) the chain is Extracellular. 2 disulfides stabilise this stretch: cysteine 112–cysteine 121 and cysteine 115–cysteine 126. The C-type lectin domain occupies 122–228 (HRNNCYQFFN…CANLNTYICM (107 aa)). N-linked (GlcNAc...) asparagine glycans are attached at residues asparagine 137, asparagine 147, and asparagine 179. 2 disulfide bridges follow: cysteine 143/cysteine 227 and cysteine 205/cysteine 219.

Homodimer; disulfide-linked. Heterohexamer composed of two subunits of KLRK1 and four subunits of HCST/DAP10. Isoform 1 (via transmembrane domain) interacts with HCST/DAP10; the interaction is required for KLRK1 cell surface expression on activated CD8(+) T-cells, but is dispensable on activated TYROBP-expressing NK cells. Isoform 2 (via transmembrane domain) interacts with HCST/DAP10 (via transmembrane domain); the interaction is required for KLRK1 NK cell surface expression and induces NK cell-mediated cytotoxicity. Isoform 2 (via transmembrane domain) interacts with TYROBP (via transmembrane domain); the interaction is required for KLRK1 NK cell surface expression and induce NK cell-mediated cytotoxicity and cytokine secretion. Isoform 1 does not interact with TYROBP. Interacts with CEACAM1; recruits PTPN6 that dephosphorylates VAV1. Expressed in natural killer (NK) cells, activated CD8(+) alpha-beta and gamma-delta T-cells and natural killer T (NKT) cells (at protein level). May be expressed on dendritic cell (DC). Isoform 1 is strongly expressed in natural killer (NK) cells. Isoform 2 is weakly expressed in natural killer (NK) cells. Isoform 1 and isoform 2 are expressed in stimulated, but not in unstimulated, CD8(+) T-cells and macrophages.

Its subcellular location is the cell membrane. Its function is as follows. Functions as an activating and costimulatory receptor involved in immunosurveillance upon binding to various cellular stress-inducible ligands displayed at the surface of autologous tumor cells and virus-infected cells. Provides both stimulatory and costimulatory innate immune responses on activated killer (NK) cells, leading to cytotoxic activity. Acts as a costimulatory receptor for T-cell receptor (TCR) in CD8(+) T-cell-mediated adaptive immune responses by amplifying T-cell activation. Stimulates perforin-mediated elimination of ligand-expressing tumor cells. Signaling involves calcium influx, culminating in the expression of TNF-alpha. Participates in NK cell-mediated bone marrow graft rejection. May play a regulatory role in differentiation and survival of NK cells. Binds to ligands belonging to various subfamilies of MHC class I-related glycoproteins including RAET1A, RAET1B, RAET1C, RAET1D, RAET1E, H60 and MULT1. The sequence is that of NKG2-D type II integral membrane protein (Klrk1) from Mus musculus (Mouse).